A 417-amino-acid polypeptide reads, in one-letter code: Origin of replication complex subunit 4 (417 aa).

An ATP-binding site is contributed by 59–66 (GPRGSGKA).

It belongs to the ORC4 family. In terms of assembly, component of the origin recognition complex (ORC) composed of at least ORC1 (ORC1A or ORC1B), ORC2, ORC3, ORC4, ORC5 and ORC6. ORC is regulated in a cell-cycle and development dependent manner. It is sequentially assembled at the exit from anaphase of mitosis and disassembled as cells enter S phase. Interacts directly with ORC1A, ORC2, ORC3, ORC5 and ORC6. As to expression, follow a cell-cycle regulation with a peak at the G1/S-phase. Isoform AtORC4a is expressed at low levels ubiquitously. Isoform AtORC4b is mostly expressed in siliques, flowers and flower buds, and, to a lower exent, in roots, leaves and stems.

Its subcellular location is the nucleus. Its function is as follows. Component of the origin recognition complex (ORC) that binds origins of replication. DNA-binding is ATP-dependent. The specific DNA sequences that define origins of replication have not been identified yet. ORC is required to assemble the pre-replication complex necessary to initiate DNA replication. The protein is Origin of replication complex subunit 4 of Arabidopsis thaliana (Mouse-ear cress).